The following is a 452-amino-acid chain: 3-phosphoshikimate 1-carboxyvinyltransferase (452 aa).

Residues 1-17 (MSHAAAAKPATARKSQA) are compositionally biased toward low complexity. Positions 1-26 (MSHAAAAKPATARKSQALSGTARVPG) are disordered. 3-phosphoshikimate is bound by residues Lys-28, Ser-29, and Arg-33. Lys-28 contacts phosphoenolpyruvate. Phosphoenolpyruvate contacts are provided by Gly-100 and Arg-128. Residues Ser-174, Gln-176, Asp-327, and Lys-354 each coordinate 3-phosphoshikimate. Position 176 (Gln-176) interacts with phosphoenolpyruvate. Asp-327 (proton acceptor) is an active-site residue. Residues Arg-358 and Arg-409 each coordinate phosphoenolpyruvate.

This sequence belongs to the EPSP synthase family. As to quaternary structure, monomer.

The protein localises to the cytoplasm. It carries out the reaction 3-phosphoshikimate + phosphoenolpyruvate = 5-O-(1-carboxyvinyl)-3-phosphoshikimate + phosphate. Its pathway is metabolic intermediate biosynthesis; chorismate biosynthesis; chorismate from D-erythrose 4-phosphate and phosphoenolpyruvate: step 6/7. Functionally, catalyzes the transfer of the enolpyruvyl moiety of phosphoenolpyruvate (PEP) to the 5-hydroxyl of shikimate-3-phosphate (S3P) to produce enolpyruvyl shikimate-3-phosphate and inorganic phosphate. The sequence is that of 3-phosphoshikimate 1-carboxyvinyltransferase from Mesorhizobium japonicum (strain LMG 29417 / CECT 9101 / MAFF 303099) (Mesorhizobium loti (strain MAFF 303099)).